The sequence spans 141 residues: Head virion protein G6P (141 aa).

Transmembrane regions (helical) follow at residues tryptophan 3–alanine 23, glycine 33–isoleucine 53, and leucine 80–isoleucine 100.

This sequence belongs to the inovirus G6P protein family. Interacts with G3P; this interaction is required for proper integration of G3P and G6P into the virion.

It localises to the virion. It is found in the host membrane. Functionally, plays essential roles both in the entry of the viral genome into the bacterial host and in budding process. The formation of the G3P-G6P complex termed adsorption complex is essential for correct termination of filamentous phage assembly. This chain is Head virion protein G6P (VI), found in Pseudomonas phage Pf1 (Bacteriophage Pf1).